The sequence spans 322 residues: Short-chain dehydrogenase TIC 32, chloroplastic (322 aa).

NADP(+) is bound by residues 36 to 42, 88 to 89, Asn-115, and Thr-136; these read GASSGIG and DL. Position 170 (Ser-170) interacts with substrate. Tyr-192 acts as the Proton acceptor in catalysis. An interaction with calmodulin region spans residues 298 to 314; that stretch reads DTELAKKVWDFSTKLTD.

The protein belongs to the short-chain dehydrogenases/reductases (SDR) family. Part of the Tic complex. Interacts with TIC110. Expressed in leaves and roots.

The protein localises to the plastid. It is found in the chloroplast inner membrane. Functionally, involved in protein precursor import into chloroplasts. Part of the redox regulon consisting of TIC32, TIC 55 and TIC62. This chain is Short-chain dehydrogenase TIC 32, chloroplastic, found in Arabidopsis thaliana (Mouse-ear cress).